Here is a 375-residue protein sequence, read N- to C-terminus: Chaperone protein DnaJ (375 aa).

The J domain maps to 5-70 (DFYETLGVAK…QKRAAYDRYG (66 aa)). Residues 136–214 (GKTAQIRVPT…CHGQGRVTEE (79 aa)) form a CR-type zinc finger. Residues C149, C152, C166, C169, C188, C191, C202, and C205 each coordinate Zn(2+). CXXCXGXG motif repeat units follow at residues 149-156 (CDVCSGSG), 166-173 (CGTCQGSG), 188-195 (CPTCHGRG), and 202-209 (CPKCHGQG).

This sequence belongs to the DnaJ family. In terms of assembly, homodimer. It depends on Zn(2+) as a cofactor.

It localises to the cytoplasm. Its function is as follows. Participates actively in the response to hyperosmotic and heat shock by preventing the aggregation of stress-denatured proteins and by disaggregating proteins, also in an autonomous, DnaK-independent fashion. Unfolded proteins bind initially to DnaJ; upon interaction with the DnaJ-bound protein, DnaK hydrolyzes its bound ATP, resulting in the formation of a stable complex. GrpE releases ADP from DnaK; ATP binding to DnaK triggers the release of the substrate protein, thus completing the reaction cycle. Several rounds of ATP-dependent interactions between DnaJ, DnaK and GrpE are required for fully efficient folding. Also involved, together with DnaK and GrpE, in the DNA replication of plasmids through activation of initiation proteins. This is Chaperone protein DnaJ from Rhizobium etli (strain CIAT 652).